We begin with the raw amino-acid sequence, 321 residues long: uncharacterized protein (321 aa).

A run of 10 helical transmembrane segments spans residues 6 to 26 (LFIG…MFPV), 37 to 57 (FYFS…LLLV), 72 to 92 (WIIL…FLGQ), 100 to 120 (IMTA…ILWG), 134 to 154 (ILIA…SFFF), 160 to 180 (LFSI…TMGG), 196 to 216 (CLFG…QGYV), 223 to 243 (VIAA…IIAL), 255 to 275 (SING…IMVI), and 277 to 297 (GYNI…GLIL). EamA domains follow at residues 18-146 (MSWG…MVIT) and 175-300 (VYTM…LNNI).

Belongs to the EamA transporter family.

It is found in the cell membrane. This is an uncharacterized protein from Bacillus subtilis (strain 168).